The sequence spans 117 residues: Putative pterin-4-alpha-carbinolamine dehydratase (117 aa).

This sequence belongs to the pterin-4-alpha-carbinolamine dehydratase family.

It catalyses the reaction (4aS,6R)-4a-hydroxy-L-erythro-5,6,7,8-tetrahydrobiopterin = (6R)-L-erythro-6,7-dihydrobiopterin + H2O. In Azoarcus sp. (strain BH72), this protein is Putative pterin-4-alpha-carbinolamine dehydratase.